A 242-amino-acid polypeptide reads, in one-letter code: Small ribosomal subunit protein uS2 (242 aa).

This sequence belongs to the universal ribosomal protein uS2 family.

In Vibrio campbellii (strain ATCC BAA-1116), this protein is Small ribosomal subunit protein uS2.